The primary structure comprises 114 residues: Vesicle-associated membrane protein 2 (114 aa).

Residues 1–11 (MSAPAAGPPAA) show a composition bias toward pro residues. A disordered region spans residues 1-31 (MSAPAAGPPAAAPGDGAPQGPPNLTSNRRLQ). S2 carries the post-translational modification N-acetylserine. Residues 2 to 92 (SAPAAGPPAA…KRKYWWKNMK (91 aa)) lie on the Cytoplasmic side of the membrane. The region spanning 29 to 89 (RLQQTQAQVD…AKLKRKYWWK (61 aa)) is the v-SNARE coiled-coil homology domain. A helical; Anchor for type IV membrane protein membrane pass occupies residues 93 to 111 (MMIIMGVICAIILIIIIVY). Residues 112-114 (FST) lie on the Vesicular side of the membrane.

This sequence belongs to the synaptobrevin family.

It localises to the cytoplasmic vesicle. The protein localises to the secretory vesicle. The protein resides in the synaptic vesicle membrane. It is found in the cell membrane. Involved in the targeting and/or fusion of transport vesicles to their target membrane. Major SNARE protein of synaptic vesicles which mediates fusion of synaptic vesicles to release neurotransmitters. Essential for fast vesicular exocytosis and activity-dependent neurotransmitter release as well as fast endocytosis that mediates rapid reuse of synaptic vesicles. In Xenopus laevis (African clawed frog), this protein is Vesicle-associated membrane protein 2 (vamp2).